The chain runs to 469 residues: Dihydrolipoyl dehydrogenase (469 aa).

FAD is bound by residues 34–42, K51, and G114; that span reads EKQYWGGVC. C42 and C47 are disulfide-bonded. Residues 179–183, E202, and 269–272 each bind NAD(+); these read GAGAI and SVGF. FAD contacts are provided by D312 and A320. Residue H448 is the Proton acceptor of the active site.

Belongs to the class-I pyridine nucleotide-disulfide oxidoreductase family. As to quaternary structure, homodimer. Part of an unusual ODH/PDH supercomplex, consisting of AceE (E1), AceF (E2), and Lpd (E3) together with OdhA (E1+E2). FAD is required as a cofactor.

Its subcellular location is the cytoplasm. It carries out the reaction N(6)-[(R)-dihydrolipoyl]-L-lysyl-[protein] + NAD(+) = N(6)-[(R)-lipoyl]-L-lysyl-[protein] + NADH + H(+). It functions in the pathway carbohydrate metabolism; tricarboxylic acid cycle; succinyl-CoA from 2-oxoglutarate (dehydrogenase route): step 1/1. Its function is as follows. Lipoamide dehydrogenase is an essential component of the pyruvate dehydrogenase (PDH) and 2-oxoglutarate dehydrogenase (ODH) complexes. Catalyzes the reoxidation of dihydrolipoyl groups which are covalently attached to the lipoate acyltransferase components (E2) of the complexes. Also catalyzes a reversible NADH:NAD(+) transhydrogenation, and is able to transfer electrons from NADH to various redox-active compounds and quinones. May be involved in quinone redox cycling in C.glutamicum. In Corynebacterium glutamicum (strain ATCC 13032 / DSM 20300 / JCM 1318 / BCRC 11384 / CCUG 27702 / LMG 3730 / NBRC 12168 / NCIMB 10025 / NRRL B-2784 / 534), this protein is Dihydrolipoyl dehydrogenase (lpd).